The sequence spans 441 residues: tRNA (guanine(37)-N(1))-methyltransferase (441 aa).

The N-terminal 9 residues, 1–9 (MFAPPAARA), are a transit peptide targeting the mitochondrion. S-adenosyl-L-methionine contacts are provided by residues R221, 248-249 (DL), 276-277 (DG), and N331.

It belongs to the class I-like SAM-binding methyltransferase superfamily. TRM5/TYW2 family. Monomer.

The protein localises to the mitochondrion matrix. It localises to the nucleus. Its subcellular location is the cytoplasm. The catalysed reaction is guanosine(37) in tRNA + S-adenosyl-L-methionine = N(1)-methylguanosine(37) in tRNA + S-adenosyl-L-homocysteine + H(+). Functionally, specifically methylates the N1 position of guanosine-37 in various cytoplasmic and mitochondrial tRNAs. Methylation is not dependent on the nature of the nucleoside 5' of the target nucleoside. This is the first step in the biosynthesis of wybutosine (yW), a modified base adjacent to the anticodon of tRNAs and required for accurate decoding. This chain is tRNA (guanine(37)-N(1))-methyltransferase, found in Phaeosphaeria nodorum (strain SN15 / ATCC MYA-4574 / FGSC 10173) (Glume blotch fungus).